The sequence spans 120 residues: NAD(P)H-quinone oxidoreductase subunit 3, chloroplastic (120 aa).

3 helical membrane passes run 2 to 22, 64 to 84, and 88 to 108; these read FLLYEYDIFWAFLIISSVIPI, MFALVFVVFDVETIFLYPWAL, and ILGVSVFIEALIFVLILVLGL.

The protein belongs to the complex I subunit 3 family. As to quaternary structure, NDH is composed of at least 16 different subunits, 5 of which are encoded in the nucleus.

The protein localises to the plastid. The protein resides in the chloroplast thylakoid membrane. The catalysed reaction is a plastoquinone + NADH + (n+1) H(+)(in) = a plastoquinol + NAD(+) + n H(+)(out). It catalyses the reaction a plastoquinone + NADPH + (n+1) H(+)(in) = a plastoquinol + NADP(+) + n H(+)(out). In terms of biological role, NDH shuttles electrons from NAD(P)H:plastoquinone, via FMN and iron-sulfur (Fe-S) centers, to quinones in the photosynthetic chain and possibly in a chloroplast respiratory chain. The immediate electron acceptor for the enzyme in this species is believed to be plastoquinone. Couples the redox reaction to proton translocation, and thus conserves the redox energy in a proton gradient. In Oenothera biennis (German evening primrose), this protein is NAD(P)H-quinone oxidoreductase subunit 3, chloroplastic.